The primary structure comprises 55 residues: ATP synthase protein 8 (55 aa).

Residues 4-24 (LDPAPWFSMLTVSWLIIFLLI) traverse the membrane as a helical segment.

Belongs to the ATPase protein 8 family. As to quaternary structure, F-type ATPases have 2 components, CF(1) - the catalytic core - and CF(0) - the membrane proton channel.

Its subcellular location is the mitochondrion membrane. Mitochondrial membrane ATP synthase (F(1)F(0) ATP synthase or Complex V) produces ATP from ADP in the presence of a proton gradient across the membrane which is generated by electron transport complexes of the respiratory chain. F-type ATPases consist of two structural domains, F(1) - containing the extramembraneous catalytic core and F(0) - containing the membrane proton channel, linked together by a central stalk and a peripheral stalk. During catalysis, ATP synthesis in the catalytic domain of F(1) is coupled via a rotary mechanism of the central stalk subunits to proton translocation. Part of the complex F(0) domain. Minor subunit located with subunit a in the membrane. The polypeptide is ATP synthase protein 8 (MT-ATP8) (Petromyzon marinus (Sea lamprey)).